The following is a 160-amino-acid chain: UPF0178 protein BPP1051 (160 aa).

The protein belongs to the UPF0178 family.

The polypeptide is UPF0178 protein BPP1051 (Bordetella parapertussis (strain 12822 / ATCC BAA-587 / NCTC 13253)).